Consider the following 256-residue polypeptide: Type III pantothenate kinase (256 aa).

6–13 (DIGNTHIV) serves as a coordination point for ATP. A substrate-binding site is contributed by 109-112 (GADR). D111 acts as the Proton acceptor in catalysis. Residue D132 coordinates K(+). An ATP-binding site is contributed by T135. T186 contacts substrate.

It belongs to the type III pantothenate kinase family. In terms of assembly, homodimer. NH4(+) is required as a cofactor. K(+) serves as cofactor.

The protein localises to the cytoplasm. It carries out the reaction (R)-pantothenate + ATP = (R)-4'-phosphopantothenate + ADP + H(+). It participates in cofactor biosynthesis; coenzyme A biosynthesis; CoA from (R)-pantothenate: step 1/5. Its function is as follows. Catalyzes the phosphorylation of pantothenate (Pan), the first step in CoA biosynthesis. This chain is Type III pantothenate kinase, found in Fusobacterium nucleatum subsp. nucleatum (strain ATCC 25586 / DSM 15643 / BCRC 10681 / CIP 101130 / JCM 8532 / KCTC 2640 / LMG 13131 / VPI 4355).